A 212-amino-acid polypeptide reads, in one-letter code: Methylthioribulose-1-phosphate dehydratase (212 aa).

Residues H97 and H99 each coordinate Zn(2+).

It belongs to the aldolase class II family. MtnB subfamily. Homotetramer. It depends on Zn(2+) as a cofactor.

The enzyme catalyses 5-(methylsulfanyl)-D-ribulose 1-phosphate = 5-methylsulfanyl-2,3-dioxopentyl phosphate + H2O. It participates in amino-acid biosynthesis; L-methionine biosynthesis via salvage pathway; L-methionine from S-methyl-5-thio-alpha-D-ribose 1-phosphate: step 2/6. In terms of biological role, catalyzes the dehydration of methylthioribulose-1-phosphate (MTRu-1-P) into 2,3-diketo-5-methylthiopentyl-1-phosphate (DK-MTP-1-P). The polypeptide is Methylthioribulose-1-phosphate dehydratase (Bacillus mycoides (strain KBAB4) (Bacillus weihenstephanensis)).